A 417-amino-acid chain; its full sequence is Glutamyl-tRNA reductase (417 aa).

Residues 49–52 (TCNR), Ser105, 110–112 (EPQ), and Gln116 contribute to the substrate site. The Nucleophile role is filled by Cys50. 185 to 190 (GAGEMI) serves as a coordination point for NADP(+).

It belongs to the glutamyl-tRNA reductase family. Homodimer.

The enzyme catalyses (S)-4-amino-5-oxopentanoate + tRNA(Glu) + NADP(+) = L-glutamyl-tRNA(Glu) + NADPH + H(+). It participates in porphyrin-containing compound metabolism; protoporphyrin-IX biosynthesis; 5-aminolevulinate from L-glutamyl-tRNA(Glu): step 1/2. Catalyzes the NADPH-dependent reduction of glutamyl-tRNA(Glu) to glutamate 1-semialdehyde (GSA). This is Glutamyl-tRNA reductase from Azoarcus sp. (strain BH72).